A 142-amino-acid chain; its full sequence is Deoxyuridine 5'-triphosphate nucleotidohydrolase (142 aa).

Substrate contacts are provided by residues 62–64 (RSG), asparagine 75, 79–81 (TID), and lysine 89.

This sequence belongs to the dUTPase family. Requires Mg(2+) as cofactor.

It catalyses the reaction dUTP + H2O = dUMP + diphosphate + H(+). Its pathway is pyrimidine metabolism; dUMP biosynthesis; dUMP from dCTP (dUTP route): step 2/2. This enzyme is involved in nucleotide metabolism: it produces dUMP, the immediate precursor of thymidine nucleotides and it decreases the intracellular concentration of dUTP so that uracil cannot be incorporated into DNA. The sequence is that of Deoxyuridine 5'-triphosphate nucleotidohydrolase from Nautilia profundicola (strain ATCC BAA-1463 / DSM 18972 / AmH).